We begin with the raw amino-acid sequence, 590 residues long: V-type ATP synthase alpha chain (590 aa).

231–238 (GPFGSGKT) serves as a coordination point for ATP.

This sequence belongs to the ATPase alpha/beta chains family.

It catalyses the reaction ATP + H2O + 4 H(+)(in) = ADP + phosphate + 5 H(+)(out). In terms of biological role, produces ATP from ADP in the presence of a proton gradient across the membrane. The V-type alpha chain is a catalytic subunit. The polypeptide is V-type ATP synthase alpha chain (Clostridium botulinum (strain Langeland / NCTC 10281 / Type F)).